The sequence spans 198 residues: Imidazoleglycerol-phosphate dehydratase (198 aa).

This sequence belongs to the imidazoleglycerol-phosphate dehydratase family.

The protein localises to the cytoplasm. It carries out the reaction D-erythro-1-(imidazol-4-yl)glycerol 3-phosphate = 3-(imidazol-4-yl)-2-oxopropyl phosphate + H2O. Its pathway is amino-acid biosynthesis; L-histidine biosynthesis; L-histidine from 5-phospho-alpha-D-ribose 1-diphosphate: step 6/9. This Methylobacillus flagellatus (strain ATCC 51484 / DSM 6875 / VKM B-1610 / KT) protein is Imidazoleglycerol-phosphate dehydratase.